We begin with the raw amino-acid sequence, 255 residues long: Indole-3-glycerol phosphate synthase (255 aa).

It belongs to the TrpC family.

The catalysed reaction is 1-(2-carboxyphenylamino)-1-deoxy-D-ribulose 5-phosphate + H(+) = (1S,2R)-1-C-(indol-3-yl)glycerol 3-phosphate + CO2 + H2O. The protein operates within amino-acid biosynthesis; L-tryptophan biosynthesis; L-tryptophan from chorismate: step 4/5. In Streptococcus pneumoniae (strain Hungary19A-6), this protein is Indole-3-glycerol phosphate synthase.